The primary structure comprises 301 residues: tRNA-cytidine(32) 2-sulfurtransferase (301 aa).

Positions 55–60 (SGGKDS) match the PP-loop motif motif. The [4Fe-4S] cluster site is built by Cys130, Cys133, and Cys221.

It belongs to the TtcA family. In terms of assembly, homodimer. Mg(2+) serves as cofactor. Requires [4Fe-4S] cluster as cofactor.

The protein localises to the cytoplasm. It carries out the reaction cytidine(32) in tRNA + S-sulfanyl-L-cysteinyl-[cysteine desulfurase] + AH2 + ATP = 2-thiocytidine(32) in tRNA + L-cysteinyl-[cysteine desulfurase] + A + AMP + diphosphate + H(+). It functions in the pathway tRNA modification. In terms of biological role, catalyzes the ATP-dependent 2-thiolation of cytidine in position 32 of tRNA, to form 2-thiocytidine (s(2)C32). The sulfur atoms are provided by the cysteine/cysteine desulfurase (IscS) system. The polypeptide is tRNA-cytidine(32) 2-sulfurtransferase (Acinetobacter baumannii (strain AB307-0294)).